Reading from the N-terminus, the 432-residue chain is Adenylosuccinate synthetase (432 aa).

Residues 13–19 (GDEGKGK) and 41–43 (GHT) each bind GTP. D14 acts as the Proton acceptor in catalysis. The Mg(2+) site is built by D14 and G41. IMP-binding positions include 14 to 17 (DEGK), 39 to 42 (NAGH), T131, R145, Q226, T241, and R305. Catalysis depends on H42, which acts as the Proton donor. 301-307 (SVTGRAR) is a substrate binding site. GTP-binding positions include R307, 333 to 335 (KLD), and 416 to 418 (STG).

Belongs to the adenylosuccinate synthetase family. Homodimer. It depends on Mg(2+) as a cofactor.

The protein localises to the cytoplasm. It carries out the reaction IMP + L-aspartate + GTP = N(6)-(1,2-dicarboxyethyl)-AMP + GDP + phosphate + 2 H(+). The protein operates within purine metabolism; AMP biosynthesis via de novo pathway; AMP from IMP: step 1/2. Functionally, plays an important role in the de novo pathway of purine nucleotide biosynthesis. Catalyzes the first committed step in the biosynthesis of AMP from IMP. The polypeptide is Adenylosuccinate synthetase (Neisseria meningitidis serogroup B (strain ATCC BAA-335 / MC58)).